The primary structure comprises 584 residues: DNA mismatch repair protein MutL (584 aa).

This sequence belongs to the DNA mismatch repair MutL/HexB family.

Its function is as follows. This protein is involved in the repair of mismatches in DNA. It is required for dam-dependent methyl-directed DNA mismatch repair. May act as a 'molecular matchmaker', a protein that promotes the formation of a stable complex between two or more DNA-binding proteins in an ATP-dependent manner without itself being part of a final effector complex. This Syntrophomonas wolfei subsp. wolfei (strain DSM 2245B / Goettingen) protein is DNA mismatch repair protein MutL.